A 230-amino-acid chain; its full sequence is Leucyl/phenylalanyl-tRNA--protein transferase (230 aa).

The protein belongs to the L/F-transferase family.

It is found in the cytoplasm. It catalyses the reaction N-terminal L-lysyl-[protein] + L-leucyl-tRNA(Leu) = N-terminal L-leucyl-L-lysyl-[protein] + tRNA(Leu) + H(+). It carries out the reaction N-terminal L-arginyl-[protein] + L-leucyl-tRNA(Leu) = N-terminal L-leucyl-L-arginyl-[protein] + tRNA(Leu) + H(+). The enzyme catalyses L-phenylalanyl-tRNA(Phe) + an N-terminal L-alpha-aminoacyl-[protein] = an N-terminal L-phenylalanyl-L-alpha-aminoacyl-[protein] + tRNA(Phe). Functions in the N-end rule pathway of protein degradation where it conjugates Leu, Phe and, less efficiently, Met from aminoacyl-tRNAs to the N-termini of proteins containing an N-terminal arginine or lysine. The chain is Leucyl/phenylalanyl-tRNA--protein transferase from Rhodopseudomonas palustris (strain BisB18).